An 888-amino-acid chain; its full sequence is Probable disease resistance protein At5g63020 (888 aa).

Residues 22 to 66 adopt a coiled-coil conformation; sequence LNRNGDYIHGLEENLTALQRALEQIEQRREDLLRKILSEERRGLQ. Positions 139–442 constitute an NB-ARC domain; it reads AERVDAARVE…GEGFIDRNKG (304 aa). 181–188 provides a ligand contact to ATP; that stretch reads GMGGVGKT. 5 LRR repeats span residues 512–533, 534–555, 558–580, 582–604, and 605–627; these read VARRVSLMFNNIESIRDAPESP, QLITLLLRKNFLGHISSSFFRL, MLVVLDLSMNRDLRHLPNEISEC, SLQYLSLSRTRIRIWPAGLVELR, and KLLYLNLEYTRMVESICGISGLT.

This sequence belongs to the disease resistance NB-LRR family.

Its function is as follows. Probable disease resistance protein. This Arabidopsis thaliana (Mouse-ear cress) protein is Probable disease resistance protein At5g63020.